The primary structure comprises 159 residues: Transcription elongation factor A protein-like 1 (159 aa).

The interval 1–121 is disordered; it reads MDKPRKENEE…QFKGDIHGRN (121 aa). The span at 17–34 shows a compositional bias: basic and acidic residues; it reads KTDEERPPVEHSPEKQSP. Positions 37 to 54 are enriched in acidic residues; it reads QSSEEQSSEEEFFPEELL. Basic and acidic residues-rich tracts occupy residues 64-80 and 95-119; these read SEER…DLFE and HKLE…DIHG.

Belongs to the TFS-II family. TFA subfamily.

It localises to the nucleus. May be involved in transcriptional regulation. Modulates various viral and cellular promoters in a promoter context-dependent manner. Does not bind DNA directly. This is Transcription elongation factor A protein-like 1 from Gorilla gorilla gorilla (Western lowland gorilla).